The sequence spans 340 residues: Hyaluronan and proteoglycan link protein 2 (340 aa).

The N-terminal stretch at 1 to 26 (MPGWLTLPTLCRFLLWAFTIFHKAQG) is a signal peptide. In terms of domain architecture, Ig-like V-type spans 34-144 (PHYLLPPIHE…EDESVALTLS (111 aa)). 5 disulfides stabilise this stretch: Cys-57/Cys-128, Cys-170/Cys-240, Cys-194/Cys-215, Cys-265/Cys-336, and Cys-290/Cys-311. Link domains follow at residues 148 to 242 (VVFP…FCFT) and 245 to 338 (LAGQ…YCYA).

The protein belongs to the HAPLN family. In terms of tissue distribution, expressed only in adult brain.

The protein localises to the secreted. Its subcellular location is the extracellular space. The protein resides in the extracellular matrix. Its function is as follows. Mediates a firm binding of versican V2 to hyaluronic acid. May play a pivotal role in the formation of the hyaluronan-associated matrix in the central nervous system (CNS) which facilitates neuronal conduction and general structural stabilization. Binds to hyaluronic acid. The polypeptide is Hyaluronan and proteoglycan link protein 2 (HAPLN2) (Homo sapiens (Human)).